The sequence spans 566 residues: 3-oxosteroid 1-dehydrogenase (566 aa).

10–39 (DVVVVGSGAAGMVAALVAAHRGLSTVVVEK) serves as a coordination point for FAD.

It belongs to the FAD-dependent oxidoreductase 2 family. 3-oxosteroid dehydrogenase subfamily. Requires FAD as cofactor.

It carries out the reaction a 3-oxosteroid + A = a 3-oxo-Delta(1)-steroid + AH2. It catalyses the reaction a 3-oxo-Delta(4)-steroid + A = a 3-oxo-Delta(1,4)-steroid + AH2. In terms of biological role, involved in the degradation of cholesterol. Catalyzes the elimination of the C-1 and C-2 hydrogen atoms of the A-ring from the polycyclic ring structure of 3-ketosteroids. Is also involved in the formation of 3-keto-1,4-diene-steroid from 3-keto-4-ene-steroid. This is 3-oxosteroid 1-dehydrogenase (kstD) from Mycobacterium tuberculosis (strain CDC 1551 / Oshkosh).